Here is a 113-residue protein sequence, read N- to C-terminus: Iron-sulfur cluster insertion protein ErpA (113 aa).

Iron-sulfur cluster is bound by residues cysteine 41, cysteine 105, and cysteine 107.

This sequence belongs to the HesB/IscA family. Homodimer. The cofactor is iron-sulfur cluster.

Required for insertion of 4Fe-4S clusters for at least IspG. This chain is Iron-sulfur cluster insertion protein ErpA, found in Colwellia psychrerythraea (strain 34H / ATCC BAA-681) (Vibrio psychroerythus).